Reading from the N-terminus, the 151-residue chain is Globin CTT-VIII (151 aa).

The 145-residue stretch at 4 to 148 folds into the Globin domain; the sequence is PMSADQLALF…MFFYILHALE (145 aa). Heme b is bound by residues His62 and His97.

The protein belongs to the globin family. Homodimer.

The protein is Globin CTT-VIII (CTT-8) of Chironomus thummi thummi (Midge).